The primary structure comprises 318 residues: Ribosomal RNA small subunit methyltransferase H (318 aa).

S-adenosyl-L-methionine-binding positions include 34-36 (GGH), Asp53, Phe82, Asp103, and Gln110.

This sequence belongs to the methyltransferase superfamily. RsmH family.

Its subcellular location is the cytoplasm. The enzyme catalyses cytidine(1402) in 16S rRNA + S-adenosyl-L-methionine = N(4)-methylcytidine(1402) in 16S rRNA + S-adenosyl-L-homocysteine + H(+). In terms of biological role, specifically methylates the N4 position of cytidine in position 1402 (C1402) of 16S rRNA. This is Ribosomal RNA small subunit methyltransferase H from Limosilactobacillus reuteri (strain DSM 20016) (Lactobacillus reuteri).